The following is a 530-amino-acid chain: AP-4 complex subunit mu (530 aa).

The segment at 164–187 (PKQGVKPIHSGSKNSSSGGSSLST) is disordered. The span at 173–186 (SGSKNSSSGGSSLS) shows a compositional bias: low complexity. Positions 227-527 (DNEIYIDLCE…ITDSKSFVSR (301 aa)) constitute an MHD domain.

The protein belongs to the adaptor complexes medium subunit family. May be part of the adaptor protein complex 4 (AP-4), a heterotetramer composed of two large adaptins (epsilon-type subunitand beta-type subunit), a medium adaptin (mu-type subunit) and a small adaptin (sigma-type).

The protein localises to the golgi apparatus. It is found in the trans-Golgi network membrane. Its subcellular location is the early endosome. Its function is as follows. Probable component of an adaptor protein complex. Adaptor protein complexes are vesicle coat components involved both in vesicle formation and cargo selection. They control the vesicular transport of proteins in different trafficking pathways. This Dictyostelium discoideum (Social amoeba) protein is AP-4 complex subunit mu (apm4).